The chain runs to 508 residues: MAQVINTNSLSLLTQNNLNKSQSSLSSAIERLSSGLRINSAKDDAAGQAIANRFTSNIKGLTQASRNANDGISIAQTTEGALNEINNNLQRVRELSVQATNGTNSDSDLKSIQDEIQQRLEEIDRVSNQTQFNGVKVLSQDNQMKIQVGANDGETITIDLQKIDVKSLGLDGFNVNGPKEATVGDLKSSFKNVTGYDTYAVGANKYRVDVNSGAVVTDTTAPTVPDKVYVNAANGQLTTADAQNNTAVDLFKSTKSAAGTDDAKAIATSIKGGKVGDTFDYKGVSFTIDTKAGDDGNGTVSTTINGEKVTLTISDIGASATDVNSAKIQSSKDVYTSVVSGQFTFADKTKNESAKLSDLEANNAVKGESKITVNGAEYTANAAGDKVTLAGKTMFIDKTASGVSTLINEDAAAAKKSTANPLASIDSALSKVDAVRSSLGAIQNRFDSAITNLGNTVTNLNSARSRIEDADYATEVSNMSKAQILQQAGTSVLAQANQVPQNVLSLLR.

It belongs to the bacterial flagellin family.

Its subcellular location is the secreted. The protein localises to the bacterial flagellum. Flagellin is the subunit protein which polymerizes to form the filaments of bacterial flagella. The chain is Flagellin (fliC) from Salmonella oranienberg.